A 258-amino-acid polypeptide reads, in one-letter code: Protein UL24 homolog (258 aa).

It belongs to the herpesviridae UL24 family.

The protein resides in the virion. The protein localises to the host cytoplasm. Its subcellular location is the host nucleus. It localises to the host nucleolus. It is found in the host Golgi apparatus. Functionally, may participate in nuclear egress of viral particles. Plays a role in the dispersal of several host nucleolar proteins including NCL/nucleolin and NPM1. Since deletion of host NCL/nucleolin negatively impact on nuclear egress, UL24 supposedly acts on this process through its effect on host nucleoli. This chain is Protein UL24 homolog, found in Varicella-zoster virus (strain Dumas) (HHV-3).